Reading from the N-terminus, the 91-residue chain is DNA-directed RNA polymerase subunit Rpo11 (91 aa).

Belongs to the archaeal Rpo11/eukaryotic RPB11/RPC19 RNA polymerase subunit family. Part of the RNA polymerase complex.

The protein resides in the cytoplasm. It catalyses the reaction RNA(n) + a ribonucleoside 5'-triphosphate = RNA(n+1) + diphosphate. In terms of biological role, DNA-dependent RNA polymerase (RNAP) catalyzes the transcription of DNA into RNA using the four ribonucleoside triphosphates as substrates. This Methanococcoides burtonii (strain DSM 6242 / NBRC 107633 / OCM 468 / ACE-M) protein is DNA-directed RNA polymerase subunit Rpo11.